The sequence spans 198 residues: Putative peptidyl-prolyl cis-trans isomerase (198 aa).

Residues 14–195 (NEIKVAMHTN…HDVVIESIDV (182 aa)) form the PPIase cyclophilin-type domain.

It belongs to the cyclophilin-type PPIase family.

The catalysed reaction is [protein]-peptidylproline (omega=180) = [protein]-peptidylproline (omega=0). PPIases accelerate the folding of proteins. It catalyzes the cis-trans isomerization of proline imidic peptide bonds in oligopeptides. The polypeptide is Putative peptidyl-prolyl cis-trans isomerase (Staphylococcus haemolyticus (strain JCSC1435)).